A 310-amino-acid polypeptide reads, in one-letter code: Aspartate carbamoyltransferase catalytic subunit (310 aa).

2 residues coordinate carbamoyl phosphate: arginine 55 and threonine 56. Lysine 83 contributes to the L-aspartate binding site. The carbamoyl phosphate site is built by arginine 105, histidine 136, and glutamine 139. Positions 169 and 223 each coordinate L-aspartate. Carbamoyl phosphate-binding residues include glycine 264 and proline 265.

This sequence belongs to the aspartate/ornithine carbamoyltransferase superfamily. ATCase family. As to quaternary structure, heterododecamer (2C3:3R2) of six catalytic PyrB chains organized as two trimers (C3), and six regulatory PyrI chains organized as three dimers (R2).

The enzyme catalyses carbamoyl phosphate + L-aspartate = N-carbamoyl-L-aspartate + phosphate + H(+). The protein operates within pyrimidine metabolism; UMP biosynthesis via de novo pathway; (S)-dihydroorotate from bicarbonate: step 2/3. In terms of biological role, catalyzes the condensation of carbamoyl phosphate and aspartate to form carbamoyl aspartate and inorganic phosphate, the committed step in the de novo pyrimidine nucleotide biosynthesis pathway. This Saccharopolyspora erythraea (strain ATCC 11635 / DSM 40517 / JCM 4748 / NBRC 13426 / NCIMB 8594 / NRRL 2338) protein is Aspartate carbamoyltransferase catalytic subunit.